The primary structure comprises 1859 residues: DNA-directed RNA polymerase subunit beta'' (1859 aa).

Zn(2+) is bound by residues C286, C359, C366, and C369.

It belongs to the RNA polymerase beta' chain family. RpoC2 subfamily. In terms of assembly, in plastids the minimal PEP RNA polymerase catalytic core is composed of four subunits: alpha, beta, beta', and beta''. When a (nuclear-encoded) sigma factor is associated with the core the holoenzyme is formed, which can initiate transcription. It depends on Zn(2+) as a cofactor.

The protein resides in the plastid. Its subcellular location is the chloroplast. It catalyses the reaction RNA(n) + a ribonucleoside 5'-triphosphate = RNA(n+1) + diphosphate. In terms of biological role, DNA-dependent RNA polymerase catalyzes the transcription of DNA into RNA using the four ribonucleoside triphosphates as substrates. This chain is DNA-directed RNA polymerase subunit beta'', found in Oltmannsiellopsis viridis (Marine flagellate).